The following is a 476-amino-acid chain: Bifunctional protein HldE (476 aa).

The interval 1–318 (MAQYSAEFKQ…ENAIHARPET (318 aa)) is ribokinase. ATP is bound at residue 195-198 (NMSE). D264 is an active-site residue. The cytidylyltransferase stretch occupies residues 344–476 (MTNGCFDILH…VIEKIKLLKD (133 aa)).

In the N-terminal section; belongs to the carbohydrate kinase PfkB family. This sequence in the C-terminal section; belongs to the cytidylyltransferase family. As to quaternary structure, homodimer.

The catalysed reaction is D-glycero-beta-D-manno-heptose 7-phosphate + ATP = D-glycero-beta-D-manno-heptose 1,7-bisphosphate + ADP + H(+). It catalyses the reaction D-glycero-beta-D-manno-heptose 1-phosphate + ATP + H(+) = ADP-D-glycero-beta-D-manno-heptose + diphosphate. It participates in nucleotide-sugar biosynthesis; ADP-L-glycero-beta-D-manno-heptose biosynthesis; ADP-L-glycero-beta-D-manno-heptose from D-glycero-beta-D-manno-heptose 7-phosphate: step 1/4. It functions in the pathway nucleotide-sugar biosynthesis; ADP-L-glycero-beta-D-manno-heptose biosynthesis; ADP-L-glycero-beta-D-manno-heptose from D-glycero-beta-D-manno-heptose 7-phosphate: step 3/4. In terms of biological role, catalyzes the phosphorylation of D-glycero-D-manno-heptose 7-phosphate at the C-1 position to selectively form D-glycero-beta-D-manno-heptose-1,7-bisphosphate. Its function is as follows. Catalyzes the ADP transfer from ATP to D-glycero-beta-D-manno-heptose 1-phosphate, yielding ADP-D-glycero-beta-D-manno-heptose. The sequence is that of Bifunctional protein HldE from Haemophilus influenzae (strain 86-028NP).